Consider the following 299-residue polypeptide: Protoheme IX farnesyltransferase 1 (299 aa).

Transmembrane regions (helical) follow at residues 25–45, 47–67, 95–115, 119–139, 147–167, 173–193, 217–237, 243–263, and 279–299; these read VVVLMLITSLVGMFLATRAGV, WSVLLFGNLGIGLCAGGAAVV, LPALAFALLLAVMGLALLLAF, LTAWLTLASLLGYAVLYTGFL, IVIGGLAGAAPPLLGWVAVSG, PLLLVLIIFAWTPPHFWALAI, ALHILLYTLILLAVSLLPYAI, LYLACALALGLRFLHWAWVLY, and IGYLFALFIALLVDHYLLLNL.

The protein belongs to the UbiA prenyltransferase family. Protoheme IX farnesyltransferase subfamily.

It is found in the cell inner membrane. The catalysed reaction is heme b + (2E,6E)-farnesyl diphosphate + H2O = Fe(II)-heme o + diphosphate. Its pathway is porphyrin-containing compound metabolism; heme O biosynthesis; heme O from protoheme: step 1/1. Functionally, converts heme B (protoheme IX) to heme O by substitution of the vinyl group on carbon 2 of heme B porphyrin ring with a hydroxyethyl farnesyl side group. In Pseudomonas entomophila (strain L48), this protein is Protoheme IX farnesyltransferase 1.